Consider the following 87-residue polypeptide: Small ribosomal subunit protein uS17 (87 aa).

The protein belongs to the universal ribosomal protein uS17 family. Part of the 30S ribosomal subunit.

Its function is as follows. One of the primary rRNA binding proteins, it binds specifically to the 5'-end of 16S ribosomal RNA. The sequence is that of Small ribosomal subunit protein uS17 from Pelotomaculum thermopropionicum (strain DSM 13744 / JCM 10971 / SI).